The chain runs to 273 residues: Dermonecrotic toxin LhSicTox-alphaIA2bvi (273 aa).

H5 is a catalytic residue. Residues E25 and D27 each coordinate Mg(2+). H41 functions as the Nucleophile in the catalytic mechanism. 2 cysteine pairs are disulfide-bonded: C45–C51 and C47–C190. D85 lines the Mg(2+) pocket.

This sequence belongs to the arthropod phospholipase D family. Class II subfamily. Requires Mg(2+) as cofactor. Expressed by the venom gland.

Its subcellular location is the secreted. It catalyses the reaction an N-(acyl)-sphingosylphosphocholine = an N-(acyl)-sphingosyl-1,3-cyclic phosphate + choline. The catalysed reaction is an N-(acyl)-sphingosylphosphoethanolamine = an N-(acyl)-sphingosyl-1,3-cyclic phosphate + ethanolamine. It carries out the reaction a 1-acyl-sn-glycero-3-phosphocholine = a 1-acyl-sn-glycero-2,3-cyclic phosphate + choline. The enzyme catalyses a 1-acyl-sn-glycero-3-phosphoethanolamine = a 1-acyl-sn-glycero-2,3-cyclic phosphate + ethanolamine. Dermonecrotic toxins cleave the phosphodiester linkage between the phosphate and headgroup of certain phospholipids (sphingolipid and lysolipid substrates), forming an alcohol (often choline) and a cyclic phosphate. This toxin acts on sphingomyelin (SM). It may also act on ceramide phosphoethanolamine (CPE), lysophosphatidylcholine (LPC) and lysophosphatidylethanolamine (LPE), but not on lysophosphatidylserine (LPS), and lysophosphatidylglycerol (LPG). It acts by transphosphatidylation, releasing exclusively cyclic phosphate products as second products. Induces dermonecrosis, hemolysis, increased vascular permeability, edema, inflammatory response, and platelet aggregation. In Loxosceles hirsuta (Recluse spider), this protein is Dermonecrotic toxin LhSicTox-alphaIA2bvi.